We begin with the raw amino-acid sequence, 302 residues long: MLRHVFLFLSQNKTLTKFAKAYGTRLGARRFVAGDTIESAVKTVKRLNRSGLCATIDYLGEYAASEKEANQVAEECKKAIQAIAEHQLNSELSLKLTSIGLDLSEELALTHLRAILSVAKQYDVAVTIDMEDYSHYEQTLSIYRQCKQEFEKLGTVIQAYLYRAAEDIRKMRDLKPNLRLVKGAYKESAAVAFPDKRGTDLHFQSLIKLQLLSGNYTAVATHDDDIIAFTKQLVAEHQIPASQFEFQMLYGIRPERQKELAKEGYRMRVYVPYGTDWFSYFMRRIAERPANAAFVLKGILKK.

Lys95 is a substrate binding site. Residue Asp129 is part of the active site. Residues Met130 and Gln158 each coordinate FAD. Arg179 is an active-site residue. FAD contacts are provided by residues 182–184 (KGA) and 221–222 (TH). 283–284 (RR) is a binding site for substrate.

It belongs to the proline dehydrogenase family. Requires FAD as cofactor.

The enzyme catalyses L-proline + a quinone = (S)-1-pyrroline-5-carboxylate + a quinol + H(+). The protein operates within amino-acid degradation; L-proline degradation into L-glutamate; L-glutamate from L-proline: step 1/2. Its function is as follows. Converts proline to delta-1-pyrroline-5-carboxylate. This chain is Proline dehydrogenase 1 (fadM), found in Bacillus subtilis (strain 168).